A 272-amino-acid chain; its full sequence is NH(3)-dependent NAD(+) synthetase (272 aa).

An ATP-binding site is contributed by 45 to 52; that stretch reads GISGGQDS. Asp51 serves as a coordination point for Mg(2+). Arg138 is a binding site for deamido-NAD(+). ATP is bound at residue Thr158. Position 163 (Glu163) interacts with Mg(2+). Residues Lys171 and Asp178 each contribute to the deamido-NAD(+) site. Residues Lys187 and Thr209 each contribute to the ATP site. 258–259 contributes to the deamido-NAD(+) binding site; it reads HK.

It belongs to the NAD synthetase family. In terms of assembly, homodimer.

The catalysed reaction is deamido-NAD(+) + NH4(+) + ATP = AMP + diphosphate + NAD(+) + H(+). Its pathway is cofactor biosynthesis; NAD(+) biosynthesis; NAD(+) from deamido-NAD(+) (ammonia route): step 1/1. Functionally, catalyzes the ATP-dependent amidation of deamido-NAD to form NAD. Uses ammonia as a nitrogen source. This chain is NH(3)-dependent NAD(+) synthetase, found in Bacillus velezensis (strain DSM 23117 / BGSC 10A6 / LMG 26770 / FZB42) (Bacillus amyloliquefaciens subsp. plantarum).